Consider the following 213-residue polypeptide: Uridine kinase (213 aa).

Position 15–22 (15–22 (GGSGSGKT)) interacts with ATP.

Belongs to the uridine kinase family.

Its subcellular location is the cytoplasm. The enzyme catalyses uridine + ATP = UMP + ADP + H(+). The catalysed reaction is cytidine + ATP = CMP + ADP + H(+). It functions in the pathway pyrimidine metabolism; CTP biosynthesis via salvage pathway; CTP from cytidine: step 1/3. It participates in pyrimidine metabolism; UMP biosynthesis via salvage pathway; UMP from uridine: step 1/1. This is Uridine kinase from Ligilactobacillus salivarius (strain UCC118) (Lactobacillus salivarius).